Reading from the N-terminus, the 548-residue chain is T-complex protein 1 subunit theta (548 aa).

A disordered region spans residues 527–548 (QATGGPKPRGPKAQDEDDDGMA).

This sequence belongs to the TCP-1 chaperonin family. In terms of assembly, heterooligomeric complex.

The protein localises to the cytoplasm. Its function is as follows. Molecular chaperone; assists the folding of proteins upon ATP hydrolysis. Known to play a role, in vitro, in the folding of actin and tubulin. Required for correct subcellular localization of pgl-1. The polypeptide is T-complex protein 1 subunit theta (cct-8) (Caenorhabditis elegans).